A 163-amino-acid chain; its full sequence is Urease accessory protein UreE (163 aa).

Residues 144 to 163 (QPEPGAYGGSSAGSHDGHHH) form a disordered region.

The protein belongs to the UreE family.

Its subcellular location is the cytoplasm. In terms of biological role, involved in urease metallocenter assembly. Binds nickel. Probably functions as a nickel donor during metallocenter assembly. This is Urease accessory protein UreE from Aliivibrio fischeri (strain MJ11) (Vibrio fischeri).